Here is a 448-residue protein sequence, read N- to C-terminus: Probable glycine dehydrogenase (decarboxylating) subunit 1 (448 aa).

This sequence belongs to the GcvP family. N-terminal subunit subfamily. As to quaternary structure, the glycine cleavage system is composed of four proteins: P, T, L and H. In this organism, the P 'protein' is a heterodimer of two subunits.

It catalyses the reaction N(6)-[(R)-lipoyl]-L-lysyl-[glycine-cleavage complex H protein] + glycine + H(+) = N(6)-[(R)-S(8)-aminomethyldihydrolipoyl]-L-lysyl-[glycine-cleavage complex H protein] + CO2. Functionally, the glycine cleavage system catalyzes the degradation of glycine. The P protein binds the alpha-amino group of glycine through its pyridoxal phosphate cofactor; CO(2) is released and the remaining methylamine moiety is then transferred to the lipoamide cofactor of the H protein. The protein is Probable glycine dehydrogenase (decarboxylating) subunit 1 of Pyrococcus furiosus (strain ATCC 43587 / DSM 3638 / JCM 8422 / Vc1).